A 237-amino-acid chain; its full sequence is Opacity protein opA57 (237 aa).

Residue A1 is a signal peptide.

It belongs to the opacity porin family.

It is found in the cell outer membrane. In terms of biological role, implicated in a number of adherence functions. OPA proteins are implicated in pathogenesis and are subject to phase variation. The polypeptide is Opacity protein opA57 (opaK) (Neisseria gonorrhoeae).